A 64-amino-acid chain; its full sequence is Small ribosomal subunit protein bS21 (64 aa).

The protein belongs to the bacterial ribosomal protein bS21 family.

The polypeptide is Small ribosomal subunit protein bS21 (Flavobacterium johnsoniae (strain ATCC 17061 / DSM 2064 / JCM 8514 / BCRC 14874 / CCUG 350202 / NBRC 14942 / NCIMB 11054 / UW101) (Cytophaga johnsonae)).